The following is a 369-amino-acid chain: Serpentine receptor class epsilon-45 (369 aa).

Transmembrane regions (helical) follow at residues methionine 1–leucine 21, phenylalanine 39–isoleucine 59, threonine 67–isoleucine 87, phenylalanine 127–valine 147, glycine 169–phenylalanine 191, histidine 195–valine 217, valine 258–leucine 278, and isoleucine 291–valine 311.

It belongs to the nematode receptor-like protein sre family.

Its subcellular location is the membrane. The chain is Serpentine receptor class epsilon-45 (sre-45) from Caenorhabditis elegans.